Consider the following 435-residue polypeptide: Light-independent protochlorophyllide reductase subunit N (435 aa).

Residues Cys23, Cys48, and Cys108 each coordinate [4Fe-4S] cluster.

This sequence belongs to the BchN/ChlN family. As to quaternary structure, protochlorophyllide reductase is composed of three subunits; ChlL, ChlN and ChlB. Forms a heterotetramer of two ChlB and two ChlN subunits. [4Fe-4S] cluster is required as a cofactor.

The protein localises to the plastid. It is found in the chloroplast. The enzyme catalyses chlorophyllide a + oxidized 2[4Fe-4S]-[ferredoxin] + 2 ADP + 2 phosphate = protochlorophyllide a + reduced 2[4Fe-4S]-[ferredoxin] + 2 ATP + 2 H2O. It functions in the pathway porphyrin-containing compound metabolism; chlorophyll biosynthesis (light-independent). Component of the dark-operative protochlorophyllide reductase (DPOR) that uses Mg-ATP and reduced ferredoxin to reduce ring D of protochlorophyllide (Pchlide) to form chlorophyllide a (Chlide). This reaction is light-independent. The NB-protein (ChlN-ChlB) is the catalytic component of the complex. This is Light-independent protochlorophyllide reductase subunit N from Auxenochlorella protothecoides (Green microalga).